Consider the following 205-residue polypeptide: Ephrin-A1 (205 aa).

Residues 1-18 (MEFLWAPLLGLCCSLAAA) form the signal peptide. In terms of domain architecture, Ephrin RBD spans 19 to 151 (DRHTVFWNSS…RLKVTVSGKI (133 aa)). N-linked (GlcNAc...) asparagine glycosylation occurs at asparagine 26. 2 cysteine pairs are disulfide-bonded: cysteine 51/cysteine 92 and cysteine 80/cysteine 140. Serine 182 is lipidated: GPI-anchor amidated serine. The propeptide at 183 to 205 (AAPRLFPLAWTVLLLPLLLLQTP) is removed in mature form.

The protein belongs to the ephrin family. As to quaternary structure, monomer. Homodimer. Forms heterodimers with EPHA2. Binds to the receptor tyrosine kinases EPHA2, EPHA3, EPHA4, EPHA5, EPHA6 and EPHA7. Also binds with low affinity to EPHA1. In terms of processing, undergoes proteolysis by a metalloprotease to give rise to a soluble monomeric form. N-Glycosylation is required for binding to EPHA2 receptor and inducing its internalization. As to expression, brain. Down-regulated in primary glioma tissues compared to the normal tissues. The soluble monomeric form is expressed in the glioblastoma multiforme (GBM) and breast cancer cells (at protein level).

It is found in the cell membrane. It localises to the secreted. In terms of biological role, cell surface GPI-bound ligand for Eph receptors, a family of receptor tyrosine kinases which are crucial for migration, repulsion and adhesion during neuronal, vascular and epithelial development. Binds promiscuously Eph receptors residing on adjacent cells, leading to contact-dependent bidirectional signaling into neighboring cells. Plays an important role in angiogenesis and tumor neovascularization. The recruitment of VAV2, VAV3 and PI3-kinase p85 subunit by phosphorylated EPHA2 is critical for EFNA1-induced RAC1 GTPase activation and vascular endothelial cell migration and assembly. Exerts anti-oncogenic effects in tumor cells through activation and down-regulation of EPHA2. Activates EPHA2 by inducing tyrosine phosphorylation which leads to its internalization and degradation. Acts as a negative regulator in the tumorigenesis of gliomas by down-regulating EPHA2 and FAK. Can evoke collapse of embryonic neuronal growth cone and regulates dendritic spine morphogenesis. The chain is Ephrin-A1 (EFNA1) from Homo sapiens (Human).